The sequence spans 285 residues: Putative sugar uptake protein lin0444 (285 aa).

The next 9 membrane-spanning stretches (helical) occupy residues 2-21 (SIYL…PIIA), 31-50 (QLLG…FWIL), 55-77 (TVLS…LLQF), 111-133 (WQTV…GVVM), 146-168 (SVSF…YVVT), 172-194 (FDVT…AIGI), 207-229 (VTFN…LATA), 233-255 (VATS…ILIF), and 262-284 (LEWT…LSLL).

The protein belongs to the GRP transporter (TC 2.A.7.5) family.

It is found in the cell membrane. In Listeria innocua serovar 6a (strain ATCC BAA-680 / CLIP 11262), this protein is Putative sugar uptake protein lin0444.